The chain runs to 259 residues: DNA-directed RNA polymerase 30 kDa polypeptide (259 aa).

The segment at 155-195 (YNTPCPNCKSRNTTPMMIQTRAADEPPLVRHACRDCKQHFK) adopts a TFIIS-type zinc-finger fold. The Zn(2+) site is built by Cys159, Cys162, Cys187, and Cys190. Positions 214–259 (ENKEITEILPDNNPSPPESPEPASPIDDGLIRSTFDRNDEPPEDDE) are disordered. The segment covering 226-236 (NPSPPESPEPA) has biased composition (pro residues).

Belongs to the poxviridae DNA-directed RNA polymerase 30 kDa subunit family. In terms of assembly, the DNA-dependent RNA polymerase (vRNAP) consists of eight subunits encoded by early viral genes and termed according to their apparent molecular masses Rpo147, Rpo132, Rpo35, Rpo30, Rpo22, Rpo19, Rpo18, and Rpo7. The same holoenzyme, with the addition of the transcription-specificity factor RAP94, is used for early gene expression.

It is found in the virion. The protein localises to the host cytoplasm. The catalysed reaction is RNA(n) + a ribonucleoside 5'-triphosphate = RNA(n+1) + diphosphate. Part of the DNA-dependent RNA polymerase which catalyzes the transcription of viral DNA into RNA using the four ribonucleoside triphosphates as substrates. Responsible for the transcription of early, intermediate and late genes. DNA-dependent RNA polymerase associates with the early transcription factor (ETF), itself composed of OPG118/D6 and OPG134/A8, thereby allowing the early genes transcription. Late transcription, and probably also intermediate transcription, require newly synthesized RNA polymerase. This is DNA-directed RNA polymerase 30 kDa polypeptide (OPG066) from Homo sapiens (Human).